We begin with the raw amino-acid sequence, 245 residues long: Phosphoadenosine 5'-phosphosulfate reductase (245 aa).

Catalysis depends on Cys-239, which acts as the Nucleophile; cysteine thiosulfonate intermediate.

It belongs to the PAPS reductase family. CysH subfamily.

The protein localises to the cytoplasm. The enzyme catalyses [thioredoxin]-disulfide + sulfite + adenosine 3',5'-bisphosphate + 2 H(+) = [thioredoxin]-dithiol + 3'-phosphoadenylyl sulfate. It participates in sulfur metabolism; hydrogen sulfide biosynthesis; sulfite from sulfate: step 3/3. Its function is as follows. Catalyzes the formation of sulfite from phosphoadenosine 5'-phosphosulfate (PAPS) using thioredoxin as an electron donor. The sequence is that of Phosphoadenosine 5'-phosphosulfate reductase from Baumannia cicadellinicola subsp. Homalodisca coagulata.